The sequence spans 346 residues: Phenylalanine--tRNA ligase alpha subunit (346 aa).

Residue Glu259 participates in Mg(2+) binding.

This sequence belongs to the class-II aminoacyl-tRNA synthetase family. Phe-tRNA synthetase alpha subunit type 1 subfamily. As to quaternary structure, tetramer of two alpha and two beta subunits. Mg(2+) is required as a cofactor.

The protein resides in the cytoplasm. It catalyses the reaction tRNA(Phe) + L-phenylalanine + ATP = L-phenylalanyl-tRNA(Phe) + AMP + diphosphate + H(+). The chain is Phenylalanine--tRNA ligase alpha subunit from Lactococcus lactis subsp. lactis (strain IL1403) (Streptococcus lactis).